A 20-amino-acid polypeptide reads, in one-letter code: Probable cinnamyl alcohol dehydrogenase 1 (20 aa).

The protein belongs to the zinc-containing alcohol dehydrogenase family. Requires Zn(2+) as cofactor.

The enzyme catalyses (E)-cinnamyl alcohol + NADP(+) = (E)-cinnamaldehyde + NADPH + H(+). It carries out the reaction (E)-coniferol + NADP(+) = (E)-coniferaldehyde + NADPH + H(+). It catalyses the reaction (E)-sinapyl alcohol + NADP(+) = (E)-sinapaldehyde + NADPH + H(+). The catalysed reaction is (E)-4-coumaroyl alcohol + NADP(+) = (E)-4-coumaraldehyde + NADPH + H(+). The enzyme catalyses (E)-caffeyl alcohol + NADP(+) = (E)-caffeyl aldehyde + NADPH + H(+). Its pathway is aromatic compound metabolism; phenylpropanoid biosynthesis. Involved in lignin biosynthesis. Catalyzes the final step specific for the production of lignin monomers, like coniferyl alcohol, sinapyl alcohol and 4-coumaryl alcohol. This chain is Probable cinnamyl alcohol dehydrogenase 1, found in Pseudotsuga menziesii (Douglas-fir).